Here is a 196-residue protein sequence, read N- to C-terminus: Corrinoid adenosyltransferase (196 aa).

An ATP-binding site is contributed by 36-42 (GNGKGKT).

This sequence belongs to the Cob(I)alamin adenosyltransferase family.

The protein localises to the cytoplasm. The enzyme catalyses 2 cob(II)yrinate a,c diamide + reduced [electron-transfer flavoprotein] + 2 ATP = 2 adenosylcob(III)yrinate a,c-diamide + 2 triphosphate + oxidized [electron-transfer flavoprotein] + 3 H(+). The catalysed reaction is 2 cob(II)alamin + reduced [electron-transfer flavoprotein] + 2 ATP = 2 adenosylcob(III)alamin + 2 triphosphate + oxidized [electron-transfer flavoprotein] + 3 H(+). Its pathway is cofactor biosynthesis; adenosylcobalamin biosynthesis; adenosylcobalamin from cob(II)yrinate a,c-diamide: step 2/7. Its function is as follows. Required for both de novo synthesis of the corrin ring for the assimilation of exogenous corrinoids. Participates in the adenosylation of a variety of incomplete and complete corrinoids. The chain is Corrinoid adenosyltransferase (btuR) from Escherichia coli O6:H1 (strain CFT073 / ATCC 700928 / UPEC).